A 189-amino-acid polypeptide reads, in one-letter code: NADH-quinone oxidoreductase subunit B (189 aa).

Residues Cys39, Cys40, Cys104, and Cys135 each contribute to the [4Fe-4S] cluster site.

It belongs to the complex I 20 kDa subunit family. As to quaternary structure, NDH-1 is composed of 14 different subunits. Subunits NuoB, C, D, E, F, and G constitute the peripheral sector of the complex. The cofactor is [4Fe-4S] cluster.

It localises to the cell inner membrane. The catalysed reaction is a quinone + NADH + 5 H(+)(in) = a quinol + NAD(+) + 4 H(+)(out). In terms of biological role, NDH-1 shuttles electrons from NADH, via FMN and iron-sulfur (Fe-S) centers, to quinones in the respiratory chain. The immediate electron acceptor for the enzyme in this species is believed to be a menaquinone. Couples the redox reaction to proton translocation (for every two electrons transferred, four hydrogen ions are translocated across the cytoplasmic membrane), and thus conserves the redox energy in a proton gradient. The protein is NADH-quinone oxidoreductase subunit B of Chlorobaculum tepidum (strain ATCC 49652 / DSM 12025 / NBRC 103806 / TLS) (Chlorobium tepidum).